Reading from the N-terminus, the 333-residue chain is N-acetyl-gamma-glutamyl-phosphate reductase (333 aa).

The active site involves C145.

The protein belongs to the NAGSA dehydrogenase family. Type 1 subfamily.

It localises to the cytoplasm. The catalysed reaction is N-acetyl-L-glutamate 5-semialdehyde + phosphate + NADP(+) = N-acetyl-L-glutamyl 5-phosphate + NADPH + H(+). The protein operates within amino-acid biosynthesis; L-arginine biosynthesis; N(2)-acetyl-L-ornithine from L-glutamate: step 3/4. In terms of biological role, catalyzes the NADPH-dependent reduction of N-acetyl-5-glutamyl phosphate to yield N-acetyl-L-glutamate 5-semialdehyde. This chain is N-acetyl-gamma-glutamyl-phosphate reductase, found in Salinispora tropica (strain ATCC BAA-916 / DSM 44818 / JCM 13857 / NBRC 105044 / CNB-440).